A 348-amino-acid polypeptide reads, in one-letter code: Uroporphyrinogen decarboxylase (348 aa).

Substrate is bound by residues 28–32 (RQAGR), Asp78, Tyr154, Thr209, and His325.

It belongs to the uroporphyrinogen decarboxylase family. As to quaternary structure, homodimer.

It is found in the cytoplasm. It carries out the reaction uroporphyrinogen III + 4 H(+) = coproporphyrinogen III + 4 CO2. Its pathway is porphyrin-containing compound metabolism; protoporphyrin-IX biosynthesis; coproporphyrinogen-III from 5-aminolevulinate: step 4/4. Catalyzes the decarboxylation of four acetate groups of uroporphyrinogen-III to yield coproporphyrinogen-III. This chain is Uroporphyrinogen decarboxylase, found in Rhodopseudomonas palustris (strain BisA53).